The primary structure comprises 31 residues: Cyclotide vpub-A (31 aa).

The cyclopeptide (Gly-Asn) cross-link spans 1-31; it reads GVIPCGESCVFIPCISAVIGCSCKSKVCYRN. 3 disulfide bridges follow: Cys5–Cys21, Cys9–Cys23, and Cys14–Cys28.

It belongs to the cyclotide family. Bracelet subfamily. This is a cyclic peptide.

Its function is as follows. Probably participates in a plant defense mechanism. The polypeptide is Cyclotide vpub-A (Viola pubescens (Downy yellow violet)).